We begin with the raw amino-acid sequence, 514 residues long: Transcription termination factor Rho (514 aa).

The segment at 25–52 (EPSSTPGPARNARRSNRRMRHPDKDVDK) is disordered. The segment covering 35–45 (NARRSNRRMRH) has biased composition (basic residues). Positions 141–216 (LMYGEGTLEI…LRIEAINHAD (76 aa)) constitute a Rho RNA-BD domain. ATP-binding positions include 259–264 (GFGQRG), 271–276 (RAGKTM), and arginine 302.

The protein belongs to the Rho family. Homohexamer. The homohexamer assembles into an open ring structure.

In terms of biological role, facilitates transcription termination by a mechanism that involves Rho binding to the nascent RNA, activation of Rho's RNA-dependent ATPase activity, and release of the mRNA from the DNA template. This is Transcription termination factor Rho from Rhodopirellula baltica (strain DSM 10527 / NCIMB 13988 / SH1).